The primary structure comprises 508 residues: MGLPWYRVHTVVLNDPGRLLSVHIMHTALVAGWAGSMALYELAVFDPSDPVLDPMWRQGMFVIPFMTRLGITNSWGGWSITGGTITNPGIWSYEGVAGAHIVFSGLCFLAAIWHWVYWDLEIFCDERTGKPSLDLPKIFGIHLFLSGVACFGFGAFHVTGLYGPGIWVSDPYGLTGKVQPVNPAWGVEGFDPFVPGGIASHHIAAGTLGILAGLFHLSVRPPQRLYKGLRMGNIETVLSSSIAAVFFAAFVVAGTMWYGSATTPIELFGPTRYQWDQGYFQQEIYRRVSAGLAENQSLSEAWSKIPEKLAFYDYIGNNPAKGGLFRAGSMDNGDGIAVGWLGHPIFRDKDGRELFVRRMPTFFETFPVVLVDGDGIVRADVPFRRAESKYSVEQVGVTVEFYGGELNGVSYSDPATVKKYARRAQLGEIFELDRATLKSDGVFRSSPRGWFTFGHASFALLFFFGHIWHGARTLFRDVFAGIDPDLDAQVEFGAFQKLGDPTTRRQVV.

6 consecutive transmembrane segments (helical) span residues S21–S36, I101–W115, G140–F156, I203–S218, V237–V252, and S457–R472.

The protein belongs to the PsbB/PsbC family. PsbB subfamily. PSII is composed of 1 copy each of membrane proteins PsbA, PsbB, PsbC, PsbD, PsbE, PsbF, PsbH, PsbI, PsbJ, PsbK, PsbL, PsbM, PsbT, PsbX, PsbY, PsbZ, Psb30/Ycf12, at least 3 peripheral proteins of the oxygen-evolving complex and a large number of cofactors. It forms dimeric complexes. Requires Binds multiple chlorophylls. PSII binds additional chlorophylls, carotenoids and specific lipids. as cofactor.

It localises to the plastid. It is found in the chloroplast thylakoid membrane. Its function is as follows. One of the components of the core complex of photosystem II (PSII). It binds chlorophyll and helps catalyze the primary light-induced photochemical processes of PSII. PSII is a light-driven water:plastoquinone oxidoreductase, using light energy to abstract electrons from H(2)O, generating O(2) and a proton gradient subsequently used for ATP formation. This Gossypium hirsutum (Upland cotton) protein is Photosystem II CP47 reaction center protein.